Here is a 220-residue protein sequence, read N- to C-terminus: Probable metallo-hydrolase YybB (220 aa).

Residues His-67, His-69, Asp-71, His-72, His-139, Asp-158, and His-200 each coordinate Zn(2+).

It belongs to the metallo-beta-lactamase superfamily. The cofactor is Zn(2+).

This chain is Probable metallo-hydrolase YybB (yybB), found in Bacillus subtilis (strain 168).